Consider the following 565-residue polypeptide: NAD-dependent malic enzyme (565 aa).

Tyrosine 104 functions as the Proton donor in the catalytic mechanism. Residue arginine 157 coordinates NAD(+). The Proton acceptor role is filled by lysine 175. Residues glutamate 246, aspartate 247, and aspartate 270 each contribute to the a divalent metal cation site. NAD(+) is bound by residues aspartate 270 and asparagine 418.

This sequence belongs to the malic enzymes family. In terms of assembly, homotetramer. Mg(2+) serves as cofactor. It depends on Mn(2+) as a cofactor.

The catalysed reaction is (S)-malate + NAD(+) = pyruvate + CO2 + NADH. It catalyses the reaction oxaloacetate + H(+) = pyruvate + CO2. The sequence is that of NAD-dependent malic enzyme from Salmonella newport (strain SL254).